An 865-amino-acid polypeptide reads, in one-letter code: SWI/SNF chromatin-remodeling complex subunit sol1 (865 aa).

Disordered stretches follow at residues 1-34 (MNNQ…QPAY), 54-92 (MMNT…ASNG), 116-143 (QEKE…QSRE), and 163-183 (VRQT…ANQL). The span at 17 to 30 (SYPTQGQSYNTQEE) shows a compositional bias: polar residues. A compositionally biased stretch (low complexity) spans 121–139 (AMQQQQQQQQQQQLYQRQM). One can recognise an ARID domain in the interval 188–278 (AASFDKFMVS…YLLPYEEAWL (91 aa)). The interval 288 to 380 (QQAKANHSAN…QTSSSAAPVD (93 aa)) is disordered. The segment covering 328–353 (HSKSPSPAFTANRFSPAAPTTVSSER) has biased composition (polar residues). The segment covering 356–368 (PPYPSAPTRPTPP) has biased composition (pro residues). Residues Ser852 and Ser855 each carry the phosphoserine modification.

The protein belongs to the SWI1 family. In terms of assembly, component of the SWI/SNF global transcription activator complex composed of at least arp9, arp42, snf5, snf22, snf30, sbf59, sol1, ssr1, ssr2, ssr3, ssr4 and tfg3.

It localises to the nucleus. Component of the SWI/SNF complex, an ATP-dependent chromatin remodeling complex, required for the positive and negative regulation of gene expression of a large number of genes. It changes chromatin structure by altering DNA-histone contacts within a nucleosome, leading eventually to a change in nucleosome position, thus facilitating or repressing binding of gene-specific transcription factors. The polypeptide is SWI/SNF chromatin-remodeling complex subunit sol1 (sol1) (Schizosaccharomyces pombe (strain 972 / ATCC 24843) (Fission yeast)).